Here is a 477-residue protein sequence, read N- to C-terminus: Kinesin-like protein KIN-1 (477 aa).

The region spanning 3–330 (NVTVCVRFRP…VRFGTRTKLI (328 aa)) is the Kinesin motor domain. 86 to 93 (GQTGAGKT) is an ATP binding site. Positions 402 to 451 (QDAASQEVSLLTQAVEELKETVEELTDENERLRGELELAQEAAAAAAAAR) form a coiled coil.

This sequence belongs to the TRAFAC class myosin-kinesin ATPase superfamily. Kinesin family. KIN-1 subfamily. As to expression, widely expressed. Expressed in young roots and leaves, in mature roots, culm, sheath and leaves, and in panicles at various developmental stages. Strongest expression is detected in panicles. In the panicle, expression is detected in anthers, glumme, lemma and palea. In the spikelet, expression is detected in both microsporocyte and the anther walls.

It localises to the cytoplasm. Functionally, kinesin-like motor protein that exhibits microtubule-stimulated ATPase activity. Plays an essential role in male meiotic chromosomal dynamics, male gametogenesis and anther dehiscence. May play a minor and nonessential role in regulating meiotic spindle formation. The chain is Kinesin-like protein KIN-1 from Oryza sativa subsp. japonica (Rice).